The sequence spans 216 residues: MRIGILGGTFDPIHYGHIRPAIEVKHALALDKILLMPNHIPPHKQQPNLTTAQRLNMVADVCSQLDGFELCDIEAKRDTPSYTVVTLEQLKALHPEDELFFIMGMDSFLQLKSWYEWQRLFNFAHLVVCQRPGWQLDAAHPMQQILTARSHAHQETHEGHAKNTHKNSGQIFPVTITPQDISSTQIREQLAKGEIPADLLMPITLDYIQNQRLYLP.

Belongs to the NadD family.

The enzyme catalyses nicotinate beta-D-ribonucleotide + ATP + H(+) = deamido-NAD(+) + diphosphate. It participates in cofactor biosynthesis; NAD(+) biosynthesis; deamido-NAD(+) from nicotinate D-ribonucleotide: step 1/1. Functionally, catalyzes the reversible adenylation of nicotinate mononucleotide (NaMN) to nicotinic acid adenine dinucleotide (NaAD). The chain is Probable nicotinate-nucleotide adenylyltransferase from Shewanella baltica (strain OS223).